Reading from the N-terminus, the 421-residue chain is 4-hydroxy-3-methylbut-2-en-1-yl diphosphate synthase (flavodoxin) (421 aa).

Positions 311, 314, 357, and 364 each coordinate [4Fe-4S] cluster.

This sequence belongs to the IspG family. It depends on [4Fe-4S] cluster as a cofactor.

It carries out the reaction (2E)-4-hydroxy-3-methylbut-2-enyl diphosphate + oxidized [flavodoxin] + H2O + 2 H(+) = 2-C-methyl-D-erythritol 2,4-cyclic diphosphate + reduced [flavodoxin]. It participates in isoprenoid biosynthesis; isopentenyl diphosphate biosynthesis via DXP pathway; isopentenyl diphosphate from 1-deoxy-D-xylulose 5-phosphate: step 5/6. Functionally, converts 2C-methyl-D-erythritol 2,4-cyclodiphosphate (ME-2,4cPP) into 1-hydroxy-2-methyl-2-(E)-butenyl 4-diphosphate. This Stenotrophomonas maltophilia (strain K279a) protein is 4-hydroxy-3-methylbut-2-en-1-yl diphosphate synthase (flavodoxin).